Consider the following 341-residue polypeptide: MIALDTIQYYGQIPGVNHYNGKKEFMENAVKIAQLSDAYGIVGSLSFFNHSVLDPWAVSSVIMRHTERHVPLIALQPYMYPPYTAAKLIQSFTYLYDRRIDLNMITGAVTGELQQTGGYIDHSSRYKKLHEYVQVLRLLLESDSAVSFKGDYYELNNLEFKPLLPDKRLFPRIFMSGSSEEGLETGLKAADFVVTHPGPLEHFKRHFSEKVQGSAVQSAIRIEIIARESAEQAWKIAHARYPGNRQGKIQLRMKTNSESSWQRMLAELALASETYDEVFWMGGYMNGGIYSPVLVGDYEQVAAYLNEYYKLGVKAVLLGSMYSEEDFIHFSRVKEGISNPV.

This sequence belongs to the bacterial luciferase oxidoreductase family.

It catalyses the reaction 4-(gamma-L-glutamylamino)butanoyl-[BtrI ACP] + FMNH2 + O2 = 4-(gamma-L-glutamylamino)-(2S)-2-hydroxybutanoyl-[BtrI ACP] + FMN + H2O + H(+). It functions in the pathway antibiotic biosynthesis; butirosin biosynthesis. Functionally, monooxygenase component of a two-component system involved in the biosynthesis of the side chain of the aminoglycoside antibiotics in the biosynthetic pathway of butirosin. Together with BtrV, mediates hydroxylation of gamma-L-Glu-GABA-S-BtrI. Not able to hydroxylate free substrates, activation by the acyl-carrier protein is mandatory. Octanoyl-S-[BtrI acyl-carrier protein] is also accepted as substrate. This is 4-(gamma-L-glutamylamino)butanoyl-[BtrI acyl-carrier protein] monooxygenase BtrO (btrO) from Niallia circulans (Bacillus circulans).